A 447-amino-acid polypeptide reads, in one-letter code: Tubulin beta chain (447 aa).

GTP is bound by residues Gln11, Glu69, Ser138, Gly142, Thr143, Gly144, Asn204, and Asn226. Glu69 serves as a coordination point for Mg(2+). The tract at residues Asp427 to Glu447 is disordered. A compositionally biased stretch (acidic residues) spans Gly429–Glu447.

It belongs to the tubulin family. As to quaternary structure, dimer of alpha and beta chains. A typical microtubule is a hollow water-filled tube with an outer diameter of 25 nm and an inner diameter of 15 nM. Alpha-beta heterodimers associate head-to-tail to form protofilaments running lengthwise along the microtubule wall with the beta-tubulin subunit facing the microtubule plus end conferring a structural polarity. Microtubules usually have 13 protofilaments but different protofilament numbers can be found in some organisms and specialized cells. Requires Mg(2+) as cofactor.

It is found in the cytoplasm. It localises to the cytoskeleton. In terms of biological role, tubulin is the major constituent of microtubules, a cylinder consisting of laterally associated linear protofilaments composed of alpha- and beta-tubulin heterodimers. Microtubules grow by the addition of GTP-tubulin dimers to the microtubule end, where a stabilizing cap forms. Below the cap, tubulin dimers are in GDP-bound state, owing to GTPase activity of alpha-tubulin. This is Tubulin beta chain (TUB2) from Hapsidospora chrysogena (Acremonium chrysogenum).